Consider the following 391-residue polypeptide: Phosphoglycerate kinase (391 aa).

Substrate contacts are provided by residues 21–23 (DLN), Arg-36, 59–62 (HLGR), Arg-113, and Arg-146. ATP-binding positions include Lys-197, Glu-319, and 345–348 (GGDT).

It belongs to the phosphoglycerate kinase family. In terms of assembly, monomer.

It is found in the cytoplasm. The enzyme catalyses (2R)-3-phosphoglycerate + ATP = (2R)-3-phospho-glyceroyl phosphate + ADP. It functions in the pathway carbohydrate degradation; glycolysis; pyruvate from D-glyceraldehyde 3-phosphate: step 2/5. This Shewanella baltica (strain OS185) protein is Phosphoglycerate kinase.